The chain runs to 152 residues: Nucleoside diphosphate kinase (152 aa).

ATP-binding residues include Lys-11, Phe-59, Arg-87, Thr-93, Arg-104, and Asn-114. His-117 serves as the catalytic Pros-phosphohistidine intermediate.

This sequence belongs to the NDK family. Homotetramer. Requires Mg(2+) as cofactor.

The protein localises to the cytoplasm. It catalyses the reaction a 2'-deoxyribonucleoside 5'-diphosphate + ATP = a 2'-deoxyribonucleoside 5'-triphosphate + ADP. The catalysed reaction is a ribonucleoside 5'-diphosphate + ATP = a ribonucleoside 5'-triphosphate + ADP. In terms of biological role, major role in the synthesis of nucleoside triphosphates other than ATP. The ATP gamma phosphate is transferred to the NDP beta phosphate via a ping-pong mechanism, using a phosphorylated active-site intermediate. The chain is Nucleoside diphosphate kinase from Prochlorococcus marinus subsp. pastoris (strain CCMP1986 / NIES-2087 / MED4).